Reading from the N-terminus, the 246-residue chain is Uridylate kinase (246 aa).

ATP is bound at residue Lys20–Gly23. Residues Gly28–Gly33 form an involved in allosteric activation by GTP region. Gly62 is a UMP binding site. The ATP site is built by Gly63 and Arg67. UMP is bound by residues Asp82 and Thr143–Thr150. 3 residues coordinate ATP: Thr170, Tyr176, and Asp179.

This sequence belongs to the UMP kinase family. Homohexamer.

It localises to the cytoplasm. It carries out the reaction UMP + ATP = UDP + ADP. It functions in the pathway pyrimidine metabolism; CTP biosynthesis via de novo pathway; UDP from UMP (UMPK route): step 1/1. Its activity is regulated as follows. Allosterically activated by GTP. Inhibited by UTP. Its function is as follows. Catalyzes the reversible phosphorylation of UMP to UDP. The chain is Uridylate kinase from Cereibacter sphaeroides (strain ATCC 17023 / DSM 158 / JCM 6121 / CCUG 31486 / LMG 2827 / NBRC 12203 / NCIMB 8253 / ATH 2.4.1.) (Rhodobacter sphaeroides).